The primary structure comprises 959 residues: Atromentin synthetase invA1 (959 aa).

The interval 59-466 (DSSIQTKTFS…SGRIKETVIV (408 aa)) is adenylation (A) domain. The 79-residue stretch at 598–676 (TPQTETEQTL…SLANYIVALK (79 aa)) folds into the Carrier domain. The segment at 603–673 (TEQTLAAIYA…VVSSLANYIV (71 aa)) is thiolation and peptide carrier (T) domain. Ser635 carries the O-(pantetheine 4'-phosphoryl)serine modification. Positions 699–946 (PIFMVHPGVG…LMDFDHVPGF (248 aa)) are thioesterase (TE) domain.

It belongs to the ATP-dependent AMP-binding enzyme family.

It participates in secondary metabolite biosynthesis. Its function is as follows. An L-tyrosine:2-oxoglutarate aminotransferase (probably invD) and atromentin synthetase invA1 catalyze consecutive steps to turn over L-tyrosine into atromentin, which represents the generic precursor molecule for the entire terphenylquinone and pulvinic acid family of pigments, which are widely distributed secondary metabolites in homobasidiomycetes. The first step catalyzed by the aminotransferase converts L-tyrosine in to 4-hydroxyphenylpyruvate (4-HPP). Adenylation of two 4-HPP monomers by the invA1 adenylation (A) domain, covalent tethering of the monomers as a thioester and oxoester onto the invA1 thiolation (T) and thioesterase (TE) domains, respectively, and symmetric C-C-bond formation between two monomers catalyzed by the invA1 TE domain leads to atromentin. The protein is Atromentin synthetase invA1 (invA1) of Paxillus involutus (Naked brimcap).